The following is a 195-amino-acid chain: ATP-dependent Clp protease proteolytic subunit (195 aa).

Serine 98 (nucleophile) is an active-site residue. Histidine 123 is a catalytic residue.

It belongs to the peptidase S14 family. In terms of assembly, fourteen ClpP subunits assemble into 2 heptameric rings which stack back to back to give a disk-like structure with a central cavity, resembling the structure of eukaryotic proteasomes.

The protein resides in the cytoplasm. It catalyses the reaction Hydrolysis of proteins to small peptides in the presence of ATP and magnesium. alpha-casein is the usual test substrate. In the absence of ATP, only oligopeptides shorter than five residues are hydrolyzed (such as succinyl-Leu-Tyr-|-NHMec, and Leu-Tyr-Leu-|-Tyr-Trp, in which cleavage of the -Tyr-|-Leu- and -Tyr-|-Trp bonds also occurs).. In terms of biological role, cleaves peptides in various proteins in a process that requires ATP hydrolysis. Has a chymotrypsin-like activity. Plays a major role in the degradation of misfolded proteins. This is ATP-dependent Clp protease proteolytic subunit from Helicobacter pylori (strain Shi470).